Here is a 265-residue protein sequence, read N- to C-terminus: Phosphatidylglycerol--prolipoprotein diacylglyceryl transferase (265 aa).

The next 4 helical transmembrane spans lie at 10-30 (VAIA…LIGI), 56-76 (LVFW…VLFY), 87-107 (LILQ…GVLL), and 117-137 (GKGF…GLGA). Arginine 139 is a binding site for a 1,2-diacyl-sn-glycero-3-phospho-(1'-sn-glycerol). 3 consecutive transmembrane segments (helical) span residues 172-192 (PSQL…LWFY), 200-220 (MAVS…VEFV), and 227-247 (LGYL…PMIL).

This sequence belongs to the Lgt family.

It localises to the cell inner membrane. It catalyses the reaction L-cysteinyl-[prolipoprotein] + a 1,2-diacyl-sn-glycero-3-phospho-(1'-sn-glycerol) = an S-1,2-diacyl-sn-glyceryl-L-cysteinyl-[prolipoprotein] + sn-glycerol 1-phosphate + H(+). It functions in the pathway protein modification; lipoprotein biosynthesis (diacylglyceryl transfer). In terms of biological role, catalyzes the transfer of the diacylglyceryl group from phosphatidylglycerol to the sulfhydryl group of the N-terminal cysteine of a prolipoprotein, the first step in the formation of mature lipoproteins. This is Phosphatidylglycerol--prolipoprotein diacylglyceryl transferase from Azotobacter vinelandii (strain DJ / ATCC BAA-1303).